Consider the following 474-residue polypeptide: ABHD16B (474 aa).

Residues 175-295 (VICCEGNAGF…QSWKGLVVRT (121 aa)) enclose the AB hydrolase-1 domain. Catalysis depends on charge relay system residues S248, D323, and H423.

Belongs to the AB hydrolase superfamily. ABHD16 family. As to expression, expressed in most tissues, with highest expression found in the testes, skeletal muscle, and brown adipose tissue.

It catalyses the reaction a 1,2-diacyl-sn-glycero-3-phospho-L-serine + H2O = a 2-acyl-sn-glycero-3-phospho-L-serine + a fatty acid + H(+). The enzyme catalyses a 1-acylglycerol + H2O = glycerol + a fatty acid + H(+). The catalysed reaction is 1-(9Z-octadecenoyl)-glycerol + H2O = glycerol + (9Z)-octadecenoate + H(+). Hydrolyzes the sn-1 position of glycerophospholipids with high specificity towards phosphatidylserine (PS), PS-PLA1 enzyme. Also hydrolyzes the acyl chain of glycerolipids with a preference for the monoacylglycerol (MAG) 1-acylglycerol, MAG lipase. Plays a regulatory role in cellular lipid homeostasis by modulating genes involved in neutral lipid degradation and in phospholipid synthesis and composition. The sequence is that of ABHD16B from Mus musculus (Mouse).